Here is a 542-residue protein sequence, read N- to C-terminus: Amino-acid acetyltransferase, mitochondrial (542 aa).

The N-terminal 14 residues, 1–14, are a transit peptide targeting the mitochondrion; it reads MLFRRLLTTKVGYH. The region spanning 368–534 is the N-acetyltransferase domain; it reads AGSAQLPAHK…LREYITYVRD (167 aa).

This sequence belongs to the acetyltransferase family.

It is found in the mitochondrion. The catalysed reaction is L-glutamate + acetyl-CoA = N-acetyl-L-glutamate + CoA + H(+). The protein operates within amino-acid biosynthesis; L-arginine biosynthesis; N(2)-acetyl-L-ornithine from L-glutamate: step 1/4. Functionally, N-acetylglutamate synthase involved in arginine biosynthesis. In Eremothecium gossypii (strain ATCC 10895 / CBS 109.51 / FGSC 9923 / NRRL Y-1056) (Yeast), this protein is Amino-acid acetyltransferase, mitochondrial (ARG2).